A 172-amino-acid polypeptide reads, in one-letter code: 3-hydroxydecanoyl-[acyl-carrier-protein] dehydratase (172 aa).

The active site involves histidine 71.

This sequence belongs to the thioester dehydratase family. FabA subfamily. Homodimer.

Its subcellular location is the cytoplasm. It carries out the reaction a (3R)-hydroxyacyl-[ACP] = a (2E)-enoyl-[ACP] + H2O. The catalysed reaction is (3R)-hydroxydecanoyl-[ACP] = (2E)-decenoyl-[ACP] + H2O. The enzyme catalyses (2E)-decenoyl-[ACP] = (3Z)-decenoyl-[ACP]. It participates in lipid metabolism; fatty acid biosynthesis. In terms of biological role, necessary for the introduction of cis unsaturation into fatty acids. Catalyzes the dehydration of (3R)-3-hydroxydecanoyl-ACP to E-(2)-decenoyl-ACP and then its isomerization to Z-(3)-decenoyl-ACP. Can catalyze the dehydratase reaction for beta-hydroxyacyl-ACPs with saturated chain lengths up to 16:0, being most active on intermediate chain length. The chain is 3-hydroxydecanoyl-[acyl-carrier-protein] dehydratase from Pectobacterium atrosepticum (strain SCRI 1043 / ATCC BAA-672) (Erwinia carotovora subsp. atroseptica).